The primary structure comprises 298 residues: Lipoyl synthase (298 aa).

[4Fe-4S] cluster-binding residues include cysteine 40, cysteine 45, cysteine 51, cysteine 67, cysteine 71, cysteine 74, and serine 280. In terms of domain architecture, Radical SAM core spans alanine 53–serine 269.

Belongs to the radical SAM superfamily. Lipoyl synthase family. [4Fe-4S] cluster is required as a cofactor.

It is found in the cytoplasm. It carries out the reaction [[Fe-S] cluster scaffold protein carrying a second [4Fe-4S](2+) cluster] + N(6)-octanoyl-L-lysyl-[protein] + 2 oxidized [2Fe-2S]-[ferredoxin] + 2 S-adenosyl-L-methionine + 4 H(+) = [[Fe-S] cluster scaffold protein] + N(6)-[(R)-dihydrolipoyl]-L-lysyl-[protein] + 4 Fe(3+) + 2 hydrogen sulfide + 2 5'-deoxyadenosine + 2 L-methionine + 2 reduced [2Fe-2S]-[ferredoxin]. The protein operates within protein modification; protein lipoylation via endogenous pathway; protein N(6)-(lipoyl)lysine from octanoyl-[acyl-carrier-protein]. Its function is as follows. Catalyzes the radical-mediated insertion of two sulfur atoms into the C-6 and C-8 positions of the octanoyl moiety bound to the lipoyl domains of lipoate-dependent enzymes, thereby converting the octanoylated domains into lipoylated derivatives. The protein is Lipoyl synthase of Bacillus thuringiensis (strain Al Hakam).